A 586-amino-acid chain; its full sequence is Eukaryotic translation initiation factor 3 subunit D (586 aa).

2 disordered regions span residues 16-37 (EDSW…YAPF) and 104-176 (KRTF…REPS). Residues 108–131 (GRGGGTVFRGRAQRGGAGQRGGRA) are compositionally biased toward gly residues. The segment covering 162–174 (GWKDYDKPQRTRE) has biased composition (basic and acidic residues). The interval 301–315 (SIDLVTVNENAADAP) is RNA gate. The disordered stretch occupies residues 563–586 (ANTFEEDDEAADEQEEKATEESEE). A compositionally biased stretch (acidic residues) spans 566 to 577 (FEEDDEAADEQE).

It belongs to the eIF-3 subunit D family. As to quaternary structure, component of the eukaryotic translation initiation factor 3 (eIF-3) complex.

It is found in the cytoplasm. MRNA cap-binding component of the eukaryotic translation initiation factor 3 (eIF-3) complex, which is involved in protein synthesis of a specialized repertoire of mRNAs and, together with other initiation factors, stimulates binding of mRNA and methionyl-tRNAi to the 40S ribosome. The eIF-3 complex specifically targets and initiates translation of a subset of mRNAs involved in cell proliferation. In the eIF-3 complex, eif3d specifically recognizes and binds the 7-methylguanosine cap of a subset of mRNAs. This chain is Eukaryotic translation initiation factor 3 subunit D, found in Aspergillus clavatus (strain ATCC 1007 / CBS 513.65 / DSM 816 / NCTC 3887 / NRRL 1 / QM 1276 / 107).